Consider the following 419-residue polypeptide: Pregnancy-specific beta-1-glycoprotein 4 (419 aa).

The first 34 residues, 1–34, serve as a signal peptide directing secretion; it reads MGPLSAPPCTQRITWKGVLLTASLLNFWNPPTTA. The Ig-like V-type domain maps to 35-144; it reads QVTIEAQPPK…TGHFTFTLHL (110 aa). N104, N111, N199, N268, N299, and N303 each carry an N-linked (GlcNAc...) asparagine glycan. Ig-like C2-type domains are found at residues 147-234, 237-327, and 332-410; these read PKPS…VTLN, PKLS…VTLN, and PDLP…KSIT. Intrachain disulfides connect C169-C217, C262-C310, and C354-C394.

This sequence belongs to the immunoglobulin superfamily. CEA family.

It is found in the secreted. The polypeptide is Pregnancy-specific beta-1-glycoprotein 4 (PSG4) (Homo sapiens (Human)).